The sequence spans 301 residues: MGRTRKGRAISGWLVVDKPAGMTSTAVVNKVRWALGAQKAGHAGTLDPDATGVLAVALGEATKTVPYITDALKCYRFMVRLGVGTRTDDASGEVIATSEARPEDPEIEAALAAFRGEIMQVPPQFSAVKVEGERAYDLAREGERLDLAARPLWVESLELISRPDADHVELEMVCGKGGYVRSIARDLGQALGCHGHVEWLRRTWSGPFEAEDGISVATIDELAKSEELLAHVMPLACGLADLPELPATAEGAARLKCGNPGMVIASDVEFGEEAWASFQGQPVAVGIYKAGELHPTRVFNL.

Catalysis depends on aspartate 47, which acts as the Nucleophile.

This sequence belongs to the pseudouridine synthase TruB family. Type 1 subfamily.

The catalysed reaction is uridine(55) in tRNA = pseudouridine(55) in tRNA. Its function is as follows. Responsible for synthesis of pseudouridine from uracil-55 in the psi GC loop of transfer RNAs. The sequence is that of tRNA pseudouridine synthase B from Cereibacter sphaeroides (strain ATCC 17025 / ATH 2.4.3) (Rhodobacter sphaeroides).